The following is a 373-amino-acid chain: 2-phosphonomethylmalate synthase (373 aa).

The 252-residue stretch at 5 to 256 folds into the Pyruvate carboxyltransferase domain; the sequence is LVLEDTTLRD…DLGIDLTKLK (252 aa).

The protein belongs to the alpha-IPM synthase/homocitrate synthase family.

The catalysed reaction is 3-phosphonopyruvate + acetyl-CoA + H2O = (R)-2-(phosphonomethyl)malate + CoA + H(+). Its pathway is antibiotic biosynthesis. In terms of biological role, acyltransferase involved in the biosynthesis of the phosphonate antibiotic FR-900098, a potent antimalarial agent that acts as an inhibitor of 1-deoxy-D-xylulose 5-phosphate reductoisomerase (DXR), the first enzyme in the nonmevalonate pathway for isoprenoid biosynthesis. Catalyzes the condensation between acetyl-CoA and phosphonopyruvate to yield (R)-2-(phosphonomethyl)malate. This chain is 2-phosphonomethylmalate synthase, found in Streptomyces rubellomurinus (strain ATCC 31215).